We begin with the raw amino-acid sequence, 913 residues long: Protein translocase subunit SecA (913 aa).

ATP-binding positions include Gln-87, 105–109, and Asp-512; that span reads GEGKT. Cys-897, Cys-899, Cys-908, and His-909 together coordinate Zn(2+).

The protein belongs to the SecA family. Monomer and homodimer. Part of the essential Sec protein translocation apparatus which comprises SecA, SecYEG and auxiliary proteins SecDF-YajC and YidC. Requires Zn(2+) as cofactor.

It localises to the cell inner membrane. The protein localises to the cytoplasm. It catalyses the reaction ATP + H2O + cellular proteinSide 1 = ADP + phosphate + cellular proteinSide 2.. Part of the Sec protein translocase complex. Interacts with the SecYEG preprotein conducting channel. Has a central role in coupling the hydrolysis of ATP to the transfer of proteins into and across the cell membrane, serving both as a receptor for the preprotein-SecB complex and as an ATP-driven molecular motor driving the stepwise translocation of polypeptide chains across the membrane. This is Protein translocase subunit SecA from Pseudomonas syringae pv. syringae (strain B728a).